Consider the following 235-residue polypeptide: Ubiquinone/menaquinone biosynthesis C-methyltransferase UbiE (235 aa).

Residues Thr-59, Asp-84, and Ser-123 each coordinate S-adenosyl-L-methionine.

This sequence belongs to the class I-like SAM-binding methyltransferase superfamily. MenG/UbiE family.

The catalysed reaction is a 2-demethylmenaquinol + S-adenosyl-L-methionine = a menaquinol + S-adenosyl-L-homocysteine + H(+). The enzyme catalyses a 2-methoxy-6-(all-trans-polyprenyl)benzene-1,4-diol + S-adenosyl-L-methionine = a 5-methoxy-2-methyl-3-(all-trans-polyprenyl)benzene-1,4-diol + S-adenosyl-L-homocysteine + H(+). Its pathway is quinol/quinone metabolism; menaquinone biosynthesis; menaquinol from 1,4-dihydroxy-2-naphthoate: step 2/2. It participates in cofactor biosynthesis; ubiquinone biosynthesis. Functionally, methyltransferase required for the conversion of demethylmenaquinol (DMKH2) to menaquinol (MKH2) and the conversion of 2-polyprenyl-6-methoxy-1,4-benzoquinol (DDMQH2) to 2-polyprenyl-3-methyl-6-methoxy-1,4-benzoquinol (DMQH2). This is Ubiquinone/menaquinone biosynthesis C-methyltransferase UbiE from Campylobacter jejuni subsp. jejuni serotype O:6 (strain 81116 / NCTC 11828).